Reading from the N-terminus, the 957-residue chain is MEKTYNPQSIEQTLYQTWEEKGYFKPHGDTSKEAYSIMIPPPNVTGSLHMGHAFQDTIMDTLIRAERMKGKNTLWQVGTDHAGIATQMVVERKIAAEEGKTKHDYGRDAFIDKIWEWKNESGGTITKQLRRLGASVDWDRERFTMDDGLSAATQEVFVRLYEEDLIYRGKRLVNWDPKLHTAISDLEVENKDKKGFMWHFRYPLANGVKTADGKDYIVVATTRPETMLGDTGVAVNPEDPRYKDLIGKEILLPIVNRLIPIVGDEHADMEKGTGCVKITPAHDFNDYEVGKRNQLPMINILTFNADIRESAEVFTTNGEVSDVYSTEIPAKYQGMERFEARKTIVAEFEELGLLEEIKDHDLTVPYGDRGGVVIEPMLTDQWYVRTAPLAEPAVKAVEDGQIQFVPKQYENMYFAWMRDVQDWCISRQLWWGHRIPAWYDNDGKVYVGRTEEEVREKNNLAPVVVLRQDDDVLDTWFSSALWTFGTQGWPENTDALKTFHPSEVLVSGFDIIFFWVARMIMMTMHFVKDEEGNAQVPFKTVYMTGLIRDENGDKMSKSKGNVLDPIDMIDGIDLESLVEKRCGNMMQPQLAKKIEKNTRKTFENGIEPYGTDALRFTLAAMASTGRDINWDMKRLEGYRNFCNKLWNASRYVLMNTEEHDCGMSLSAEERANMEFSLADKWIESQFELAAKEFNAHLDNYRLDMAANTLYEFIWNQFCDWYLELTKPVLWKGTEAQQQATRYMLITVLEKTLRLAHPVLPYITESIWQSVKPLVDGVEGDTIMTQALPQFNEENFNADVVADLEWVKAFITSIRNLRAEYDIAPSKGLEVMIKVADEKDAARIEANKVVLSSLAKLDEIKVLANGEETPACATSLVGKSELMIPMAGLIDKDAELARLAGEVKKTQGEIKRIEGKLGNEGFVAKAPEAVIAKEREKLEGYQETLVKLEAQQETIAAL.

The 'HIGH' region signature appears at 42–52; it reads PNVTGSLHMGH. A 'KMSKS' region motif is present at residues 554-558; sequence KMSKS. Residue Lys-557 participates in ATP binding. Positions 890–956 form a coiled coil; it reads DKDAELARLA…LEAQQETIAA (67 aa).

It belongs to the class-I aminoacyl-tRNA synthetase family. ValS type 1 subfamily. As to quaternary structure, monomer.

The protein resides in the cytoplasm. The enzyme catalyses tRNA(Val) + L-valine + ATP = L-valyl-tRNA(Val) + AMP + diphosphate. Catalyzes the attachment of valine to tRNA(Val). As ValRS can inadvertently accommodate and process structurally similar amino acids such as threonine, to avoid such errors, it has a 'posttransfer' editing activity that hydrolyzes mischarged Thr-tRNA(Val) in a tRNA-dependent manner. The chain is Valine--tRNA ligase from Aliivibrio fischeri (strain ATCC 700601 / ES114) (Vibrio fischeri).